Consider the following 371-residue polypeptide: Flagellar P-ring protein (371 aa).

The first 21 residues, 1–21, serve as a signal peptide directing secretion; sequence MSRSFFATVLGLALAAMTVMA.

Belongs to the FlgI family. As to quaternary structure, the basal body constitutes a major portion of the flagellar organelle and consists of four rings (L,P,S, and M) mounted on a central rod.

The protein resides in the periplasm. Its subcellular location is the bacterial flagellum basal body. Functionally, assembles around the rod to form the L-ring and probably protects the motor/basal body from shearing forces during rotation. The sequence is that of Flagellar P-ring protein from Caulobacter sp. (strain K31).